The chain runs to 396 residues: Putative cyclin-B3-1 (396 aa).

Positions 1–98 (MLRDGNKQSK…KVLDVTAKPK (98 aa)) are disordered. Residues 21 to 32 (KTTVKTSLQNRS) show a composition bias toward polar residues. Low complexity predominate over residues 39–57 (VGRSKSRSISSIPSSAVAS). The segment covering 76–85 (GESSSSGNKD) has biased composition (polar residues).

Belongs to the cyclin family. Cyclin AB subfamily.

The sequence is that of Putative cyclin-B3-1 (CYCB3-1) from Arabidopsis thaliana (Mouse-ear cress).